The sequence spans 348 residues: 3-isopropylmalate dehydrogenase (348 aa).

76-87 is a binding site for NAD(+); sequence GPKWTDPNNRPE. Residues R94, R104, R132, and D217 each contribute to the substrate site. Mg(2+) is bound by residues D217, D241, and D245. An NAD(+)-binding site is contributed by 275–287; it reads GSAPDIAGKNVAN.

Belongs to the isocitrate and isopropylmalate dehydrogenases family. LeuB type 1 subfamily. Homodimer. Mg(2+) is required as a cofactor. It depends on Mn(2+) as a cofactor.

It is found in the cytoplasm. It catalyses the reaction (2R,3S)-3-isopropylmalate + NAD(+) = 4-methyl-2-oxopentanoate + CO2 + NADH. It functions in the pathway amino-acid biosynthesis; L-leucine biosynthesis; L-leucine from 3-methyl-2-oxobutanoate: step 3/4. Functionally, catalyzes the oxidation of 3-carboxy-2-hydroxy-4-methylpentanoate (3-isopropylmalate) to 3-carboxy-4-methyl-2-oxopentanoate. The product decarboxylates to 4-methyl-2 oxopentanoate. In Staphylococcus aureus (strain MW2), this protein is 3-isopropylmalate dehydrogenase.